Consider the following 165-residue polypeptide: MNTLQKGFTLIELMIVIAIVGILAAVALPAYQDYTARAQVSEAILLAEGQKSAVTEYYLNHGKWPENNTSAGVASPPSDIKGKYVKEVEVKNGVVTATMLSSGVNNEIKGKKLSLWARRENGSVKWFCGQPVTRTDDDTVADAKDGKEIDTKHLPSTCRDNFDAK.

Residues 1-7 constitute a propeptide, leader sequence; the sequence is MNTLQKG. Phe-8 is subject to N-methylphenylalanine. The helical transmembrane segment at 8–28 threads the bilayer; the sequence is FTLIELMIVIAIVGILAAVAL. Ser-70 carries O-linked (DADDGlc) serine glycosylation. Ser-75 is subject to O-(2-aminoethylphosphoryl)serine; alternate. The residue at position 75 (Ser-75) is an O-(2-cholinephosphoryl)serine; alternate. Residue Ser-75 is modified to Phosphoserine; alternate. O-(sn-1-glycerophosphoryl)serine; partial is present on Ser-101. A disulfide bridge links Cys-128 with Cys-158. Basic and acidic residues predominate over residues 137–153; the sequence is DDTVADAKDGKEIDTKH. The disordered stretch occupies residues 137 to 165; sequence DDTVADAKDGKEIDTKHLPSTCRDNFDAK.

Belongs to the N-Me-Phe pilin family. In terms of assembly, the pili are polar flexible filaments of about 5.4 nanometers diameter and 2.5 micrometers average length; they consist of only a single polypeptide chain arranged in a helical configuration of five subunits per turn in the assembled pilus. Post-translationally, the O-linked glycan identified as Gal-GlcNAc disaccharide in PubMed:7477282 and PubMed:10048019 is now identified as either a hexosyl-diacetamidotrideoxyhexoside (DATDHex) by mass spectrometry in PubMed:15249686, or alpha-D-galactopyranosyl-(1-&gt;3)-2,4-diacetamido-2,4-dideoxy-beta-D-glucopyranoside (DADDGlc) by X-ray diffraction in PubMed:16949362. It is not clear whether there is a chemical difference in the glycosylation of the two derivatives of strain MS11 used in these experiments, or not. In some MS11 derivative strains, Ser-75 is modified to O-(2-aminoethylphosphoryl)serine, and in some other derivatives that can be secondarily modified to O-(2-cholinephosphoryl)serine by N-methylation.

It is found in the fimbrium. Its subcellular location is the membrane. In terms of biological role, major component of the type IV pilus (T4P) that plays a role in cellular adherence, microcolony formation, resistance to neutrophil mediated killing, twitching motility as well as transformation. Mediates the attachment and the formation of bacterial microcolonies on host epithelial cells. Mechanistically, pili retractation induces host NF-kappa-B activation in infected cells, which is temporally associated with the formation of gonococcal microcolonies. In Neisseria gonorrhoeae, this protein is Type IV major pilin protein PilE1 (pilE1).